We begin with the raw amino-acid sequence, 971 residues long: 116 kDa U5 small nuclear ribonucleoprotein component (971 aa).

Methionine 1 is modified (N-acetylmethionine). The tract at residues 1–52 (MDTDLYDEFGNYIGPELDSDEDDDELGRETKDLDEDEDEDEDDVGEHEDDHP) is disordered. Acidic residues predominate over residues 17–47 (LDSDEDDDELGRETKDLDEDEDEDEDDVGEH). The residue at position 19 (serine 19) is a Phosphoserine. Lysine 63 participates in a covalent cross-link: Glycyl lysine isopeptide (Lys-Gly) (interchain with G-Cter in SUMO1); alternate. Lysine 63 is covalently cross-linked (Glycyl lysine isopeptide (Lys-Gly) (interchain with G-Cter in SUMO2); alternate). Threonine 85 bears the Phosphothreonine mark. Positions 126 to 408 (ELIRNVTLCG…GIHLTKEELK (283 aa)) constitute a tr-type G domain. Residues 135-142 (GHLHHGKT), 203-207 (DTPGH), and 257-260 (NKID) each bind GTP.

This sequence belongs to the TRAFAC class translation factor GTPase superfamily. Classic translation factor GTPase family. EF-G/EF-2 subfamily. In terms of assembly, component of the U5 snRNP and the U4/U6-U5 tri-snRNP complex, a building block of the spliceosome. The U4/U6-U5 tri-snRNP complex is composed of the U4, U6 and U5 snRNAs and at least PRPF3, PRPF4, PRPF6, PRPF8, PRPF31, SNRNP200, TXNL4A, SNRNP40, DDX23, CD2BP2, PPIH, SNU13, EFTUD2, SART1 and USP39. Component of the pre-catalytic, catalytic and post-catalytic spliceosome complexes. Component of the minor spliceosome, which splices U12-type introns. Within this complex, interacts with CRIPT. Interacts with ERBB4 and PRPF8. Interacts with PIH1D1. Interacts with RPAP3 and URI1 in a ZNHIT2-dependent manner. Interacts with NRDE2. Interacts with FAM50A. Interacts with UBL5.

It is found in the nucleus. In terms of biological role, required for pre-mRNA splicing as component of the spliceosome, including pre-catalytic, catalytic and post-catalytic spliceosomal complexes. Component of the U5 snRNP and the U4/U6-U5 tri-snRNP complex, a building block of the spliceosome. As a component of the minor spliceosome, involved in the splicing of U12-type introns in pre-mRNAs. The protein is 116 kDa U5 small nuclear ribonucleoprotein component (Eftud2) of Mus musculus (Mouse).